The sequence spans 212 residues: Ropporin-1A (212 aa).

One can recognise an RIIa domain in the interval Pro-12–Thr-49. Ser-56 carries the post-translational modification Phosphoserine. The interaction with RHPN1 stretch occupies residues Val-209 to Glu-212.

This sequence belongs to the ropporin family. As to quaternary structure, homodimer. Interacts with AKAP3 and RHPN1. May interact with SPA17. Interacts with FSCB; the interaction increases upon spermatozoa capacitation conditions. Interacts with CFAP61. Post-translationally, sumoylated, sumoylation decreases upon spermatozoa capacitation conditions. As to expression, testis specific in adult. Overexpressed in hematologic tumor cells.

The protein localises to the cell projection. The protein resides in the cilium. Its subcellular location is the flagellum. Its function is as follows. Important for male fertility. With ROPN1L, involved in fibrous sheath integrity and sperm motility, plays a role in PKA-dependent signaling processes required for spermatozoa capacitation. The protein is Ropporin-1A (ROPN1) of Homo sapiens (Human).